A 431-amino-acid chain; its full sequence is Enolase (431 aa).

Gln-166 contacts (2R)-2-phosphoglycerate. Residue Glu-208 is the Proton donor of the active site. Mg(2+) is bound by residues Asp-245, Glu-288, and Asp-315. (2R)-2-phosphoglycerate contacts are provided by Lys-340, Arg-369, Ser-370, and Lys-391. Lys-340 acts as the Proton acceptor in catalysis.

Belongs to the enolase family. Mg(2+) serves as cofactor.

The protein resides in the cytoplasm. It localises to the secreted. The protein localises to the cell surface. The enzyme catalyses (2R)-2-phosphoglycerate = phosphoenolpyruvate + H2O. It functions in the pathway carbohydrate degradation; glycolysis; pyruvate from D-glyceraldehyde 3-phosphate: step 4/5. Its function is as follows. Catalyzes the reversible conversion of 2-phosphoglycerate (2-PG) into phosphoenolpyruvate (PEP). It is essential for the degradation of carbohydrates via glycolysis. The protein is Enolase of Clostridium perfringens (strain 13 / Type A).